Reading from the N-terminus, the 609-residue chain is Protein NRT1/ PTR FAMILY 7.1 (609 aa).

2 helical membrane passes run 67–87 (IILL…GVNL) and 109–129 (WTGT…SYWG). Residue threonine 133 is modified to Phosphothreonine. 10 helical membrane-spanning segments follow: residues 136–156 (IFQV…WFFL), 173–193 (SSLG…GYGG), 216–236 (FFSY…TILV), 243–263 (LWTE…VAFL), 367–387 (PIWL…SLFV), 402–422 (IPAA…TGIY), 438–458 (MGIG…TEIQ), 474–494 (ILWQ…MYVG), 516–536 (MASM…VMAI), and 559–579 (FYFL…IFAK).

The protein belongs to the major facilitator superfamily. Proton-dependent oligopeptide transporter (POT/PTR) (TC 2.A.17) family. In terms of tissue distribution, expressed in flowers.

It localises to the membrane. The polypeptide is Protein NRT1/ PTR FAMILY 7.1 (NPF7.1) (Arabidopsis thaliana (Mouse-ear cress)).